Consider the following 338-residue polypeptide: mRNA decay activator protein ZFP36L1 (338 aa).

The segment at 1–111 (MTTTLVSATI…QKQPGGGQVN (111 aa)) is necessary and sufficient for the association with mRNA decay enzymes and mRNA decay activation. Phosphoserine; by MAPKAPK2 is present on Ser-54. At Ser-90 the chain carries Phosphoserine; by PKB/AKT1. Ser-92 is subject to Phosphoserine; by PKB/AKT1 and MAPKAPK2. The disordered stretch occupies residues 93 to 113 (EGGERLLPTQKQPGGGQVNSS). 2 consecutive C3H1-type zinc fingers follow at residues 114–142 (RYKTELCRPFEENGACKYGDKCQFAHGIH) and 152–180 (KYKTELCRTFHTIGFCPYGPRCHFIHNAE). The tract at residues 185–338 (LAGARDLSAD…IFSRLSISDD (154 aa)) is necessary for mRNA decay activation. Ser-203 carries the post-translational modification Phosphoserine; by PKB/AKT1 and MAPKAPK2. Residues 273–338 (SPTTFLFRPM…IFSRLSISDD (66 aa)) form a disordered region. The segment covering 296 to 318 (QDSLSDQEGYLSSSSSSHSGSDS) has biased composition (low complexity). A Phosphoserine modification is found at Ser-318. Ser-334 carries the post-translational modification Phosphoserine; by RPS6KA1.

As to quaternary structure, associates with the cytoplasmic CCR4-NOT deadenylase and RNA exosome complexes to trigger ARE-containing mRNA deadenylation and decay processes. Interacts with CNOT1. Interacts (via N-terminus) with CNOT6. Interacts with CNOT7; this interaction is inhibited in response to phorbol 12-myristate 13-acetate (PMA) treatment in a p38 MAPK-dependent manner. Interacts with DCP1A. Interacts (via N-terminus) with DCP2. Interacts (via N-terminus) with EXOSC2. Interacts with XRN1. Interacts (via phosphorylated form) with YWHAB; this interaction occurs in a protein kinase AKT1-dependent manner. Interacts (via phosphorylated form) with YWHAZ; this interaction occurs in a p38 MAPK- and AKT-signaling pathways. Phosphorylated. Phosphorylated by RPS6KA1 at Ser-334 upon phorbol 12-myristate 13-acetate (PMA) treatment; this phosphorylation results in dissociation of the CCR4-NOT deadenylase complex and induces p38 MAPK-mediated stabilization of the low-density lipoprotein receptor LDLR mRNA. Phosphorylated by protein kinase AKT1 at Ser-92 and Ser-203 in response to insulin; these phosphorylations stabilize ZFP36L1, increase the association with 14-3-3 proteins and mediate ARE-containing mRNA stabilization. AKT1-mediated phosphorylation at Ser-92 does not impair ARE-containing RNA-binding. Phosphorylated at Ser-54, Ser-92 and Ser-203 by MAPKAPK2; these phosphorylations increase the association with 14-3-3 proteins and mediate ARE-containing mRNA stabilization in a protein kinase AKT1-independent manner. MAPKAPK2-mediated phosphorylations at Ser-54, Ser-92 and Ser-203 do not impair ARE-containing RNA-binding. Phosphorylations increase the association with 14-3-3 proteins and mediate ARE-containing mRNA stabilization during early adipogenesis in a p38 MAPK- and AKT-dependent manner. Post-translationally, ubiquitinated. Ubiquitination leads to proteasomal degradation, a process inhibited by phosphorylations at Ser-90, Ser-92 and Ser-203. Expressed mainly in the basal epidermal layer, weakly in the suprabasal epidermal layers. Expressed in epidermal keratinocytes (at protein level). Expressed in osteoblasts.

It localises to the nucleus. The protein resides in the cytoplasm. Its subcellular location is the cytoplasmic granule. It is found in the P-body. Functionally, zinc-finger RNA-binding protein that destabilizes several cytoplasmic AU-rich element (ARE)-containing mRNA transcripts by promoting their poly(A) tail removal or deadenylation, and hence provide a mechanism for attenuating protein synthesis. Acts as a 3'-untranslated region (UTR) ARE mRNA-binding adapter protein to communicate signaling events to the mRNA decay machinery. Functions by recruiting the CCR4-NOT deadenylase complex and components of the cytoplasmic RNA decay machinery to the bound ARE-containing mRNAs, and hence promotes ARE-mediated mRNA deadenylation and decay processes. Also induces the degradation of ARE-containing mRNAs even in absence of poly(A) tail. Binds to 3'-UTR ARE of numerous mRNAs. Positively regulates early adipogenesis by promoting ARE-mediated mRNA decay of immediate early genes (IEGs). Promotes ARE-mediated mRNA decay of mineralocorticoid receptor NR3C2 mRNA in response to hypertonic stress. Negatively regulates hematopoietic/erythroid cell differentiation by promoting ARE-mediated mRNA decay of the transcription factor STAT5B mRNA. Positively regulates monocyte/macrophage cell differentiation by promoting ARE-mediated mRNA decay of the cyclin-dependent kinase CDK6 mRNA. Promotes degradation of ARE-containing pluripotency-associated mRNAs in embryonic stem cells (ESCs), such as NANOG, through a fibroblast growth factor (FGF)-induced MAPK-dependent signaling pathway, and hence attenuates ESC self-renewal and positively regulates mesendoderm differentiation. May play a role in mediating pro-apoptotic effects in malignant B-cells by promoting ARE-mediated mRNA decay of BCL2 mRNA. In association with ZFP36L2 maintains quiescence on developing B lymphocytes by promoting ARE-mediated decay of several mRNAs encoding cell cycle regulators that help B cells progress through the cell cycle, and hence ensuring accurate variable-diversity-joining (VDJ) recombination and functional immune cell formation. Together with ZFP36L2 is also necessary for thymocyte development and prevention of T-cell acute lymphoblastic leukemia (T-ALL) transformation by promoting ARE-mediated mRNA decay of the oncogenic transcription factor NOTCH1 mRNA. Participates in the delivery of target ARE-mRNAs to processing bodies (PBs). In addition to its cytosolic mRNA-decay function, plays a role in the regulation of nuclear mRNA 3'-end processing; modulates mRNA 3'-end maturation efficiency of the DLL4 mRNA through binding with an ARE embedded in a weak noncanonical polyadenylation (poly(A)) signal in endothelial cells. Also involved in the regulation of stress granule (SG) and P-body (PB) formation and fusion. Plays a role in vasculogenesis and endocardial development. Plays a role in the regulation of keratinocyte proliferation, differentiation and apoptosis. Plays a role in myoblast cell differentiation. This Homo sapiens (Human) protein is mRNA decay activator protein ZFP36L1.